The following is a 151-amino-acid chain: MSSARNYRYIVRIAGTDIDGSLKTVYGLAEIKGVGVNLAYGICRRLGIDPEMRIGYLTDEEIKRIEDLLSNPSAYDIPSWMLNRRKDYVTGKDMHLIGAELIFYVKQDIEREKKIKSWRGIRHALGLKVRGQRTRTTGRLGLTVGVRKKRR.

Belongs to the universal ribosomal protein uS13 family. Part of the 30S ribosomal subunit. Forms a loose heterodimer with protein S19. Forms two bridges to the 50S subunit in the 70S ribosome.

Its function is as follows. Located at the top of the head of the 30S subunit, it contacts several helices of the 16S rRNA. In the 70S ribosome it contacts the 23S rRNA (bridge B1a) and protein L5 of the 50S subunit (bridge B1b), connecting the 2 subunits; these bridges are implicated in subunit movement. The chain is Small ribosomal subunit protein uS13 from Staphylothermus marinus (strain ATCC 43588 / DSM 3639 / JCM 9404 / F1).